Reading from the N-terminus, the 114-residue chain is MVNEMRDDTRPHMTREDMEKRANEVANLLKTLSHPVRLMLVCTLVEGEFSVGELEQQIGIGQPTLSQQLGVLRESGIVETRRNIKQIFYRLTEAKAAQLVNALYTIFCAQEKQA.

The HTH arsR-type domain maps to 17–111; the sequence is DMEKRANEVA…ALYTIFCAQE (95 aa). Residues 51 to 74 constitute a DNA-binding region (H-T-H motif); it reads VGELEQQIGIGQPTLSQQLGVLRE.

Its function is as follows. Represses an operon that comprises itself, XF_0764, XF_0765, XF_0766 and blh. Binds to a palindromic AT-rich sequence spanning the -10 region of the blh promoter and blocks transcription of the operon. The polypeptide is Biofilm growth-associated repressor (bigR) (Xylella fastidiosa (strain 9a5c)).